A 509-amino-acid polypeptide reads, in one-letter code: Protein OS-9 homolog (509 aa).

The N-terminal stretch at 1-23 (MRRQSRIVASLLVLACASSGAFA) is a signal peptide. Positions 64–74 (SPDLNDISEQT) are enriched in polar residues. Residues 64 to 91 (SPDLNDISEQTPLKDESEESIRDGSSGE) form a disordered region. A compositionally biased stretch (basic and acidic residues) spans 75–91 (PLKDESEESIRDGSSGE). Asn120 carries N-linked (GlcNAc...) asparagine glycosylation. The MRH domain occupies 151 to 291 (GKCLYYISGW…LIYTPRLCND (141 aa)). An intrachain disulfide couples Cys153 to Cys166. A mannooligosaccharide derivative contacts are provided by Trp160, Trp161, Gln173, Asp246, Arg252, Glu273, and Tyr279. 2 cysteine pairs are disulfide-bonded: Cys245/Cys277 and Cys260/Cys289. The segment at 433–509 (GVVDTDEDEE…GSEEIFKDEL (77 aa)) is disordered. Residues 436–451 (DTDEDEEDGYENEEGE) show a composition bias toward acidic residues. Residues 452-461 (TDKREQRENT) show a composition bias toward basic and acidic residues. A compositionally biased stretch (acidic residues) spans 489–502 (RSEDGEDPDVDGSE). The Prevents secretion from ER signature appears at 506–509 (KDEL).

It belongs to the OS-9 family. As to quaternary structure, interacts with missfolded ER lumenal proteins.

The protein localises to the endoplasmic reticulum membrane. In terms of biological role, lectin involved in the quality control of the secretory pathway. As a member of the endoplasmic reticulum-associated degradation lumenal (ERAD-L) surveillance system, targets misfolded endoplasmic reticulum lumenal glycoproteins for degradation. The protein is Protein OS-9 homolog (yos9) of Emericella nidulans (strain FGSC A4 / ATCC 38163 / CBS 112.46 / NRRL 194 / M139) (Aspergillus nidulans).